Reading from the N-terminus, the 170-residue chain is CFA/I fimbrial subunit B (170 aa).

The signal sequence occupies residues 1–23 (MKFKKTIGAMALTTMFVAVSASA).

It belongs to the fimbrial CS1 protein family. In terms of assembly, CFA/I fimbriae are rather rigid, thread-like filaments of 0.5-1 micrometer, with an apparent axial hole, and a diameter of 7 nanometers. A single CFA/I fimbria consists of about 100 identical protein subunits.

The protein resides in the fimbrium. Functionally, fimbriae (also called pili), polar filaments radiating from the surface of the bacterium to a length of 0.5-1.5 micrometers and numbering 100-300 per cell, enable bacteria to colonize the epithelium of specific host organs. The protein is CFA/I fimbrial subunit B (cfaB) of Escherichia coli O78:H11 (strain H10407 / ETEC).